The following is a 137-amino-acid chain: Ribosomal RNA large subunit methyltransferase H (137 aa).

S-adenosyl-L-methionine-binding positions include L56, G85, and 104 to 109 (LSPLTL).

This sequence belongs to the RNA methyltransferase RlmH family. As to quaternary structure, homodimer.

It is found in the cytoplasm. It carries out the reaction pseudouridine(1915) in 23S rRNA + S-adenosyl-L-methionine = N(3)-methylpseudouridine(1915) in 23S rRNA + S-adenosyl-L-homocysteine + H(+). Its function is as follows. Specifically methylates the pseudouridine at position 1915 (m3Psi1915) in 23S rRNA. This is Ribosomal RNA large subunit methyltransferase H from Thermus thermophilus (strain ATCC BAA-163 / DSM 7039 / HB27).